The following is a 72-amino-acid chain: MIVAWFLLLILLEKHGLPMTQGSVNFLILSDLIFFDPLQAKSGSSLQNTDLFKCMLAINGLGPLSNTSVKIV.

This is an uncharacterized protein from Homo sapiens (Human).